The chain runs to 354 residues: Alanine racemase (354 aa).

Lys-33 serves as the catalytic Proton acceptor; specific for D-alanine. N6-(pyridoxal phosphate)lysine is present on Lys-33. A substrate-binding site is contributed by Arg-127. Catalysis depends on Tyr-251, which acts as the Proton acceptor; specific for L-alanine. Met-299 serves as a coordination point for substrate.

It belongs to the alanine racemase family. Pyridoxal 5'-phosphate is required as a cofactor.

It carries out the reaction L-alanine = D-alanine. Its pathway is amino-acid biosynthesis; D-alanine biosynthesis; D-alanine from L-alanine: step 1/1. Catalyzes the interconversion of L-alanine and D-alanine. May also act on other amino acids. The protein is Alanine racemase (alr) of Fusobacterium nucleatum subsp. nucleatum (strain ATCC 25586 / DSM 15643 / BCRC 10681 / CIP 101130 / JCM 8532 / KCTC 2640 / LMG 13131 / VPI 4355).